Reading from the N-terminus, the 158-residue chain is MKENVLDVLMYLFENYIDEDTEIEPDRIQLQDKLLEAGFPGAEIDRAFDWLENLANQEDQPLGQARHDSALRVYTDREVERLDARARGFLLFLEQNGVLDAGTRELVIDRIMDLDAEDISLDQLKWVTLMVLFNRPDQEAAYTWLESMMFDSPPEFLH.

This sequence belongs to the Smg family.

This Thioalkalivibrio sulfidiphilus (strain HL-EbGR7) protein is Protein Smg homolog.